A 320-amino-acid polypeptide reads, in one-letter code: ATP-dependent 6-phosphofructokinase isozyme 1 (320 aa).

An ATP-binding site is contributed by glycine 12. ADP is bound by residues 22 to 26 (RGVVR) and 55 to 60 (RYSVSD). Residues 73–74 (RF) and 103–106 (GDGS) contribute to the ATP site. Residue aspartate 104 coordinates Mg(2+). Residue 126-128 (TID) coordinates substrate. Aspartate 128 serves as the catalytic Proton acceptor. Position 155 (arginine 155) interacts with ADP. Substrate is bound by residues arginine 163 and 170 to 172 (MGR). Residues 186–188 (GCE), lysine 212, and 214–216 (KKH) contribute to the ADP site. Residues glutamate 223, arginine 244, and 250–253 (HIQR) each bind substrate.

The protein belongs to the phosphofructokinase type A (PFKA) family. ATP-dependent PFK group I subfamily. Prokaryotic clade 'B1' sub-subfamily. In terms of assembly, homotetramer. Requires Mg(2+) as cofactor.

It is found in the cytoplasm. The catalysed reaction is beta-D-fructose 6-phosphate + ATP = beta-D-fructose 1,6-bisphosphate + ADP + H(+). The protein operates within carbohydrate degradation; glycolysis; D-glyceraldehyde 3-phosphate and glycerone phosphate from D-glucose: step 3/4. Its activity is regulated as follows. Allosterically activated by ADP and other diphosphonucleosides, and allosterically inhibited by phosphoenolpyruvate. In terms of biological role, catalyzes the phosphorylation of D-fructose 6-phosphate to fructose 1,6-bisphosphate by ATP, the first committing step of glycolysis. The polypeptide is ATP-dependent 6-phosphofructokinase isozyme 1 (Shigella boydii serotype 18 (strain CDC 3083-94 / BS512)).